Consider the following 135-residue polypeptide: Large ribosomal subunit protein eL27 (135 aa).

The protein belongs to the eukaryotic ribosomal protein eL27 family.

The protein is Large ribosomal subunit protein eL27 (RPL27) of Pisum sativum (Garden pea).